Consider the following 410-residue polypeptide: Aspartate aminotransferase (410 aa).

Positions 47, 135, and 185 each coordinate L-aspartate. An N6-(pyridoxal phosphate)lysine modification is found at Lys-249. L-aspartate is bound at residue Arg-385.

This sequence belongs to the class-I pyridoxal-phosphate-dependent aminotransferase family. As to quaternary structure, homodimer. The cofactor is pyridoxal 5'-phosphate.

Its subcellular location is the cytoplasm. The catalysed reaction is L-aspartate + 2-oxoglutarate = oxaloacetate + L-glutamate. Functionally, catalyzes the reversible conversion of aspartate and 2-oxoglutarate to glutamate and oxaloacetate. This is Aspartate aminotransferase from Rhizobium meliloti (Ensifer meliloti).